We begin with the raw amino-acid sequence, 82 residues long: Small ribosomal subunit protein uS17 (82 aa).

This sequence belongs to the universal ribosomal protein uS17 family. Part of the 30S ribosomal subunit.

In terms of biological role, one of the primary rRNA binding proteins, it binds specifically to the 5'-end of 16S ribosomal RNA. This Bradyrhizobium sp. (strain BTAi1 / ATCC BAA-1182) protein is Small ribosomal subunit protein uS17.